The chain runs to 141 residues: 15 kDa lipoprotein (141 aa).

The N-terminal stretch at 1–17 (MVKRGRFALCLAVLLGA) is a signal peptide. Cys18 carries the N-palmitoyl cysteine lipid modification. A lipid anchor (S-diacylglycerol cysteine) is attached at Cys18.

It localises to the cell membrane. The protein is 15 kDa lipoprotein (tpp15) of Treponema pallidum (strain Nichols).